Reading from the N-terminus, the 141-residue chain is 15 kDa lipoprotein (141 aa).

The first 17 residues, 1 to 17 (MVKRGRFALCLAVLLGA), serve as a signal peptide directing secretion. The N-palmitoyl cysteine moiety is linked to residue cysteine 18. Cysteine 18 carries S-diacylglycerol cysteine lipidation.

The protein localises to the cell membrane. This Treponema pallidum (strain Nichols) protein is 15 kDa lipoprotein (tpp15).